The sequence spans 1990 residues: Protein TANC2 (1990 aa).

Disordered regions lie at residues 1–85 (MFRN…SVDE) and 129–149 (SPCS…PCST). Residues S169, S238, S294, and S400 each carry the phosphoserine modification. The interval 396–442 (IASDSPHASPKHVDANRELPLTQPPSAHSSITSGSCPGTPEMRRRQE) is disordered. Residues 419-431 (PPSAHSSITSGSC) are compositionally biased toward polar residues. ANK repeat units follow at residues 846-878 (EGLS…NINY), 884-913 (NNAP…NVDA), 917-946 (SGLT…KVDH), 950-979 (NGQC…TMAG), 990-1019 (AIQQ…KDEE), 1033-1062 (WGET…AVAQ), 1066-1095 (RGAV…DVNM), 1099-1128 (QGRT…SIAL), 1132-1161 (EGLT…ATDH), 1165-1194 (NGRT…MIEH), and 1198-1227 (SGMR…KIGP). TPR repeat units lie at residues 1244 to 1277 (LSKL…FPRE), 1291 to 1324 (VSLL…KPKS), and 1325 to 1358 (YEAY…CPNN). 3 disordered regions span residues 1372-1401 (CRQM…EPQH), 1430-1586 (EARP…KMAQ), and 1692-1718 (LTKE…PQIG). Residues S1442 and S1458 each carry the phosphoserine modification. The span at 1469-1498 (RSSSSVGSPTRQTYQSTSPALSPTHQNSHY) shows a compositional bias: polar residues. Phosphoserine is present on residues S1530 and S1545. The segment covering 1553–1572 (VYRSQSGSPVRYQQETSVSQ) has biased composition (polar residues). Asymmetric dimethylarginine occurs at positions 1563 and 1576. S1579 is modified (phosphoserine). S1722 carries the post-translational modification Phosphoserine. Positions 1783–1798 (SPSSNSISSTSNLTPT) are enriched in low complexity. Disordered regions lie at residues 1783–1803 (SPSS…RPSS) and 1821–1843 (DELS…SRTT). Phosphoserine occurs at positions 1824 and 1827. N-linked (GlcNAc...) asparagine glycosylation occurs at N1928. The interval 1968–1990 (SRDSRQGQTSPIKPKRPFVESNV) is disordered.

This sequence belongs to the TANC family. Interacts with KIF1A; the interaction decreases in presence of calcium.

It localises to the cell projection. The protein resides in the dendritic spine. Scaffolding protein in the dendritic spines which acts as immobile postsynaptic posts able to recruit KIF1A-driven dense core vesicles to dendritic spines. This chain is Protein TANC2 (TANC2), found in Homo sapiens (Human).